The primary structure comprises 622 residues: Mitochondrial distribution and morphology protein 34 (622 aa).

Positions Met1–Leu204 constitute an SMP-LTD domain. 3 disordered regions span residues Tyr364–Val393, Leu442–Gln468, and Leu572–Pro592. The span at Lys372 to Lys385 shows a compositional bias: basic residues. Residues Ser446–Ser455 are compositionally biased toward low complexity. Positions Asn577–Gly587 are enriched in polar residues.

This sequence belongs to the MDM34 family. Component of the ER-mitochondria encounter structure (ERMES) or MDM complex, composed of MMM1, MDM10, MDM12 and MDM34.

The protein resides in the mitochondrion outer membrane. Its function is as follows. Component of the ERMES/MDM complex, which serves as a molecular tether to connect the endoplasmic reticulum (ER) and mitochondria. Components of this complex are involved in the control of mitochondrial shape and protein biogenesis, and function in nonvesicular lipid trafficking between the ER and mitochondria. MDM34 is required for the interaction of the ER-resident membrane protein MMM1 and the outer mitochondrial membrane-resident beta-barrel protein MDM10. In Candida albicans (strain WO-1) (Yeast), this protein is Mitochondrial distribution and morphology protein 34.